Reading from the N-terminus, the 229-residue chain is MGGKTKKHAMRLFDRIAEKYDLLNRILSFGMDTKWRKRVVELILEVNPEKVLDLATGTGDVARLLKRKAPHLEITGLDSSSKMLEIAEKRLKDGEFIVGDAHNLPFYDRSFDAITVAFGFRNFSDRRRVLRECRRVLKRKGRLVILELLPPNTKRFTGKIYSFYLKTWVPFVGGLFSGDFHAYRYLSTSVLNFLTPDQIVEMMKEEGFEVSFEPLFFSVAGIFIGDLIW.

S-adenosyl-L-methionine contacts are provided by residues threonine 58, aspartate 78, and aspartate 100 to alanine 101.

Belongs to the class I-like SAM-binding methyltransferase superfamily. MenG/UbiE family.

The catalysed reaction is a 2-demethylmenaquinol + S-adenosyl-L-methionine = a menaquinol + S-adenosyl-L-homocysteine + H(+). The protein operates within quinol/quinone metabolism; menaquinone biosynthesis; menaquinol from 1,4-dihydroxy-2-naphthoate: step 2/2. In terms of biological role, methyltransferase required for the conversion of demethylmenaquinol (DMKH2) to menaquinol (MKH2). In Thermotoga maritima (strain ATCC 43589 / DSM 3109 / JCM 10099 / NBRC 100826 / MSB8), this protein is Demethylmenaquinone methyltransferase.